A 132-amino-acid chain; its full sequence is Small ribosomal subunit protein uS12 (132 aa).

Asp-89 is subject to 3-methylthioaspartic acid.

It belongs to the universal ribosomal protein uS12 family. Part of the 30S ribosomal subunit. Contacts proteins S8 and S17. May interact with IF1 in the 30S initiation complex.

Its function is as follows. With S4 and S5 plays an important role in translational accuracy. In terms of biological role, interacts with and stabilizes bases of the 16S rRNA that are involved in tRNA selection in the A site and with the mRNA backbone. Located at the interface of the 30S and 50S subunits, it traverses the body of the 30S subunit contacting proteins on the other side and probably holding the rRNA structure together. The combined cluster of proteins S8, S12 and S17 appears to hold together the shoulder and platform of the 30S subunit. The polypeptide is Small ribosomal subunit protein uS12 (Campylobacter curvus (strain 525.92)).